An 892-amino-acid chain; its full sequence is DNA mismatch repair protein MutS (892 aa).

607–614 is a binding site for ATP; that stretch reads GPNMSGKS. The tract at residues 826–854 is disordered; sequence ETKAETEEESQLSFFGGEQSSKKQDKPVL. Positions 845–854 are enriched in basic and acidic residues; sequence SSKKQDKPVL.

It belongs to the DNA mismatch repair MutS family.

Its function is as follows. This protein is involved in the repair of mismatches in DNA. It is possible that it carries out the mismatch recognition step. This protein has a weak ATPase activity. The chain is DNA mismatch repair protein MutS from Bacillus cereus (strain AH187).